A 200-amino-acid polypeptide reads, in one-letter code: ATP-dependent Clp protease proteolytic subunit 3 (200 aa).

The Nucleophile role is filled by Ser-101. Residue His-126 is part of the active site.

The protein belongs to the peptidase S14 family. As to quaternary structure, fourteen ClpP subunits assemble into 2 heptameric rings which stack back to back to give a disk-like structure with a central cavity, resembling the structure of eukaryotic proteasomes.

The protein localises to the cytoplasm. The catalysed reaction is Hydrolysis of proteins to small peptides in the presence of ATP and magnesium. alpha-casein is the usual test substrate. In the absence of ATP, only oligopeptides shorter than five residues are hydrolyzed (such as succinyl-Leu-Tyr-|-NHMec, and Leu-Tyr-Leu-|-Tyr-Trp, in which cleavage of the -Tyr-|-Leu- and -Tyr-|-Trp bonds also occurs).. Functionally, cleaves peptides in various proteins in a process that requires ATP hydrolysis. Has a chymotrypsin-like activity. Plays a major role in the degradation of misfolded proteins. In Parasynechococcus marenigrum (strain WH8102), this protein is ATP-dependent Clp protease proteolytic subunit 3.